The sequence spans 219 residues: Tetratricopeptide repeat protein 9A (219 aa).

The disordered stretch occupies residues 1–49; it reads MERKGLAARSSGNPSPPALGEGPRPVPPPCVPSGGGAPERGQAGTAAEP. One copy of the TPR 1 repeat lies at 56-89; the sequence is AHEFKSQGAQCYKDKKFREAIGKYHRALLELKGL. Positions 94–115 are disordered; it reads EERDARPASSAGVPKSSRLSEE. S102 is modified (phosphoserine). TPR repeat units lie at residues 125–160 and 161–194; these read IDCY…EGEN and FKAL…QPTD.

Belongs to the TTC9 family.

The polypeptide is Tetratricopeptide repeat protein 9A (Ttc9) (Mus musculus (Mouse)).